Here is a 411-residue protein sequence, read N- to C-terminus: MGILNDDAVLIEPGKISGDPTVVTVNCPDESGLGSTLCRIILEFGLSITRADFSTDGRWCYIVFWVTPDISSPKIDWDSLKNRLLSACPSCLGSFYFCLQSNVSKPPSLYLLKFFCRDRKGLLHDVTKVLTELEFTIQRVKVMTTPDGRVLDMFFITDAMDLLHTKQRQTKTCDHLTAVLGEHGVSCELELAGPELESVQRFSSLPPLAADELFGPDGFDISGSSSNKAVLTVDNQLSPAHTLLQIRCVDQKGLFYDILRTSKDCDVHIAYGRFSSKVKGYRNLELFVRGTDGNKIMDPKHQANFCARLKEEMVCPLRVIIVNRGPDTELLVANPVELSGKGRPRVFYDVTLALKSLGICIFSAEIGRHSTLDRQWEVYRFLLDESREFPLASLRARNQVVDRVTKTLMGW.

3 consecutive ACT domains span residues 22–105 (VVTV…NVSK), 111–194 (LLKF…LAGP), and 243–322 (LLQI…VIIV).

Its function is as follows. May bind amino acids. The sequence is that of ACT domain-containing protein ACR9 from Arabidopsis thaliana (Mouse-ear cress).